The primary structure comprises 168 residues: Disulfide bond formation protein B 2 (168 aa).

The Cytoplasmic portion of the chain corresponds to 1-14 (MSAPIGATRAERWT). Residues 15–31 (LLAIGVASFELVAGALW) form a helical membrane-spanning segment. Over 32–49 (IQLAWQEDPCPLCIIQRY) the chain is Periplasmic. A disulfide bridge links C41 with C44. A helical transmembrane segment spans residues 50–64 (LFLLIALFTFVAAAG). Over 65 to 69 (GRRVA) the chain is Cytoplasmic. Residues 70 to 87 (LLRVLSLTTALAGAAVAV) traverse the membrane as a helical segment. Over 88 to 142 (RHIYVQAHPGFSCGFDALQPVIDSLPPAHWLPPVFKVGGLCETLYPPILGLSLPM) the chain is Periplasmic. A disulfide bridge connects residues C100 and C128. A helical membrane pass occupies residues 143–161 (WALVGFSAIAVALGWRIRA). At 162–168 (QAVIRTA) the chain is on the cytoplasmic side.

This sequence belongs to the DsbB family.

It localises to the cell inner membrane. Its function is as follows. Required for disulfide bond formation in some periplasmic proteins. Acts by oxidizing the DsbA protein. This is Disulfide bond formation protein B 2 from Burkholderia lata (strain ATCC 17760 / DSM 23089 / LMG 22485 / NCIMB 9086 / R18194 / 383).